A 198-amino-acid polypeptide reads, in one-letter code: Na(+)-translocating NADH-quinone reductase subunit E (198 aa).

6 consecutive transmembrane segments (helical) span residues 11-31, 35-55, 77-97, 110-130, 140-160, and 176-196; these read SVFIENMALSFFLGMCTFLAV, VSTAFGLGIAVIVVLGISVPV, FLNFITFIGVIAALVQILEMF, GIFLPLITVNCAIFGGVSFMV, VVYGIGAGTGWMLAIVALAGL, and LGITFITVGLMALGFMSFSGI.

This sequence belongs to the NqrDE/RnfAE family. Composed of six subunits; NqrA, NqrB, NqrC, NqrD, NqrE and NqrF.

The protein resides in the cell inner membrane. The enzyme catalyses a ubiquinone + n Na(+)(in) + NADH + H(+) = a ubiquinol + n Na(+)(out) + NAD(+). In terms of biological role, NQR complex catalyzes the reduction of ubiquinone-1 to ubiquinol by two successive reactions, coupled with the transport of Na(+) ions from the cytoplasm to the periplasm. NqrA to NqrE are probably involved in the second step, the conversion of ubisemiquinone to ubiquinol. The sequence is that of Na(+)-translocating NADH-quinone reductase subunit E from Mannheimia succiniciproducens (strain KCTC 0769BP / MBEL55E).